Here is a 480-residue protein sequence, read N- to C-terminus: Cytochrome P450 monooxygenase ORF11 (480 aa).

The chain crosses the membrane as a helical span at residues 9 to 29; it reads LLLLPHLSALTPKTGFLIGLA. 2 N-linked (GlcNAc...) asparagine glycosylation sites follow: Asn265 and Asn352. Cys449 is a binding site for heme.

The protein belongs to the cytochrome P450 family. Requires heme as cofactor.

The protein resides in the membrane. The protein operates within sesquiterpene biosynthesis. In terms of biological role, cytochrome P450 monooxygenase; part of the gene cluster that mediates the biosynthesis of PR-toxin, a bicyclic sesquiterpene belonging to the eremophilane class and acting as a mycotoxin. The first step of the pathway is catalyzed by the aristolochene synthase which performs the cyclization of trans,trans-farnesyl diphosphate (FPP) to the bicyclic sesquiterpene aristolochene. Following the formation of aristolochene, the non-oxygenated aristolochene is converted to the trioxygenated intermediate eremofortin B, via 7-epi-neopetasone. This conversion appears to involve three enzymes, a hydroxysterol oxidase-like enzyme, the quinone-oxidase prx3 that forms the quinone-type-structure in the bicyclic nucleus of aristolochene with the C8-oxo group and the C-3 hydroxyl group, and the P450 monooxygenase ORF6 that introduces the epoxide at the double bond between carbons 1 and 2. No monoxy or dioxy-intermediates have been reported to be released to the broth, so these three early oxidative reactions may be coupled together. Eremofortin B is further oxidized by another P450 monooxygenase, that introduces a second epoxide between carbons 7 and 11 prior to acetylation to eremofortin A by the acetyltransferase ORF8. The second epoxidation may be performed by a second P450 monooxygenase. After the acetylation step, eremofortin A is converted to eremofortin C and then to PR-toxin. First the conversion of eremofortin A to eremofortin C proceeds by oxidation of the side chain of the molecule at C-12 and is catalyzed by the short-chain oxidoreductase prx1. The cytochrome P450 monooxygenase ORF6 is probably also involved in this step. The primary alcohol formed at C-12 is finally oxidized by the short-chain alcohol dehydrogenase prx4 that forms PR-toxin. This is Cytochrome P450 monooxygenase ORF11 from Penicillium roqueforti (strain FM164).